Reading from the N-terminus, the 294-residue chain is Golgi to ER traffic protein 2 (294 aa).

The interval 1 to 104 is disordered; that stretch reads MSSELSETEK…QATSPQETID (104 aa). Topologically, residues 1-166 are cytoplasmic; the sequence is MSSELSETEK…LDYNNYLINN (166 aa). Over residues 12–21 the composition is skewed to basic residues; the sequence is KLIRERRQKK. Positions 34 to 65 are enriched in polar residues; sequence ITGQAENSQLDTESPLDSKSSRETTPTVTKVD. The segment covering 85–95 has biased composition (basic and acidic residues); sequence KVEKSQKKKEQ. Residues 167–187 form a helical membrane-spanning segment; the sequence is LKVWSIIFKWCFFLIPYLFAL. Residues 188–205 are Lumenal-facing; that stretch reads TRSEPISFLPEQFSNPSN. The helical transmembrane segment at 206–225 threads the bilayer; the sequence is FFMIFLSFEIVATSIYFQKL. The Cytoplasmic segment spans residues 226 to 272; it reads QNIEKSNKINGFQSNNKIVNLVSLIPEGVLPVPDIKGKVIMALQYWD. Residues 273 to 293 traverse the membrane as a helical segment; the sequence is VFSMFLTDICFVLVMMGLFKL. Position 294 (Ile294) is a topological domain, lumenal.

Belongs to the GET2 family. As to quaternary structure, component of the Golgi to ER traffic (GET) complex, which is composed of GET1, GET2 and GET3. Within the complex, GET1 and GET2 form a heterotetramer which is stabilized by phosphatidylinositol binding and which binds to the GET3 homodimer.

Its subcellular location is the endoplasmic reticulum membrane. It localises to the golgi apparatus membrane. Its function is as follows. Required for the post-translational delivery of tail-anchored (TA) proteins to the endoplasmic reticulum. Together with GET1, acts as a membrane receptor for soluble GET3, which recognizes and selectively binds the transmembrane domain of TA proteins in the cytosol. The GET complex cooperates with the HDEL receptor ERD2 to mediate the ATP-dependent retrieval of resident ER proteins that contain a C-terminal H-D-E-L retention signal from the Golgi to the ER. In Vanderwaltozyma polyspora (strain ATCC 22028 / DSM 70294 / BCRC 21397 / CBS 2163 / NBRC 10782 / NRRL Y-8283 / UCD 57-17) (Kluyveromyces polysporus), this protein is Golgi to ER traffic protein 2.